The chain runs to 173 residues: Adenine phosphoribosyltransferase (173 aa).

It belongs to the purine/pyrimidine phosphoribosyltransferase family. Homodimer.

Its subcellular location is the cytoplasm. It catalyses the reaction AMP + diphosphate = 5-phospho-alpha-D-ribose 1-diphosphate + adenine. It participates in purine metabolism; AMP biosynthesis via salvage pathway; AMP from adenine: step 1/1. Catalyzes a salvage reaction resulting in the formation of AMP, that is energically less costly than de novo synthesis. This is Adenine phosphoribosyltransferase from Methanococcus vannielii (strain ATCC 35089 / DSM 1224 / JCM 13029 / OCM 148 / SB).